Here is a 203-residue protein sequence, read N- to C-terminus: Outer-membrane lipoprotein LolB (203 aa).

The N-terminal stretch at 1–17 is a signal peptide; sequence MNRLFRLLPLASLVLTA. The N-palmitoyl cysteine moiety is linked to residue Cys-18. Residue Cys-18 is the site of S-diacylglycerol cysteine attachment.

This sequence belongs to the LolB family. As to quaternary structure, monomer.

Its subcellular location is the cell outer membrane. Its function is as follows. Plays a critical role in the incorporation of lipoproteins in the outer membrane after they are released by the LolA protein. The sequence is that of Outer-membrane lipoprotein LolB from Klebsiella pneumoniae (strain 342).